We begin with the raw amino-acid sequence, 259 residues long: Expansin-B4 (259 aa).

A signal peptide spans 1-23 (MASSQRYFALLALFAVSLKFCYC). N25 carries N-linked (GlcNAc...) asparagine glycosylation. The region spanning 51–161 (GGACGYGSAV…KRAACLYRGT (111 aa)) is the Expansin-like EG45 domain. Intrachain disulfides connect C54-C83, C86-C156, and C91-C97. An Expansin-like CBD domain is found at 174–255 (YYISFVVEYE…NWKPDESYRS (82 aa)).

It belongs to the expansin family. Expansin B subfamily.

It is found in the secreted. Its subcellular location is the cell wall. The protein resides in the membrane. In terms of biological role, may cause loosening and extension of plant cell walls by disrupting non-covalent bonding between cellulose microfibrils and matrix glucans. No enzymatic activity has been found. The polypeptide is Expansin-B4 (EXPB4) (Arabidopsis thaliana (Mouse-ear cress)).